The chain runs to 361 residues: G-protein coupled receptor 183 (361 aa).

The Extracellular segment spans residues 1–31; the sequence is MDIQMANNFTPPSATPQGNDCDLYAHHSTAR. The chain crosses the membrane as a helical span at residues 32–57; sequence IVMPLHYSLVFIIGLVGNLLALVVIV. At 58–77 the chain is on the cytoplasmic side; sequence QNRKKINSTTLYSTNLVISD. A helical membrane pass occupies residues 78–95; sequence ILFTTALPTRIAYYAMGF. Arg87 contributes to the 7alpha,25-dihydroxycholesterol binding site. Over 96–105 the chain is Extracellular; that stretch reads DWRIGDALCR. Cys104 and Cys181 are joined by a disulfide. The chain crosses the membrane as a helical span at residues 106–127; it reads ITALVFYINTYAGVNFMTCLSI. 7alpha,25-dihydroxycholesterol-binding residues include Tyr112 and Tyr116. The interaction with G proteins stretch occupies residues 126-134; it reads SIDRFIAVV. The Cytoplasmic portion of the chain corresponds to 128–149; it reads DRFIAVVHPLRYNKIKRIEHAK. The chain crosses the membrane as a helical span at residues 150–168; sequence GVCIFVWILVFAQTLPLLI. Topologically, residues 169–192 are extracellular; that stretch reads NPMSKQEAERITCMEYPNFEETKS. A helical membrane pass occupies residues 193 to 215; sequence LPWILLGACFIGYVLPLIIILIC. Over 216-241 the chain is Cytoplasmic; that stretch reads YSQICCKLFRTAKQNPLTEKSGVNKK. A helical membrane pass occupies residues 242–265; the sequence is ALNTIILIIVVFVLCFTPYHVAII. Residue Tyr260 participates in 7alpha,25-dihydroxycholesterol binding. The Extracellular segment spans residues 266–287; sequence QHMIKKLRFSNFLECSQRHSFQ. A helical membrane pass occupies residues 288–312; it reads ISLHFTVCLMNFNCCMDPFIYFFAC. The Cytoplasmic segment spans residues 313-361; the sequence is KGYKRKVMRMLKRQVSVSISSAVKSAPEENSREMTETQMMIHSKSSNGK. Ser328 is subject to Phosphoserine. Residues 340-361 are disordered; sequence EENSREMTETQMMIHSKSSNGK. Residues 348 to 361 show a composition bias toward polar residues; the sequence is ETQMMIHSKSSNGK.

It belongs to the G-protein coupled receptor 1 family. In terms of assembly, homodimer and heterodimer. Heterodimerizes with CXCR5; leading to modulate the interaction between of CXCL13 and CXCR5. Expressed abundantly in lymphoid tissues such as spleen and lymph node, and in B- and T-lymphocytes. Also highly expressed in lung, heart and gastrointestinal tract, and weakly expressed in the urogenital system and brain. Expressed in astrocytes.

It is found in the cell membrane. Its function is as follows. G-protein coupled receptor expressed in lymphocytes that acts as a chemotactic receptor for B-cells, T-cells, splenic dendritic cells, monocytes/macrophages and astrocytes. Receptor for oxysterol 7-alpha,25-dihydroxycholesterol (7-alpha,25-OHC) and other related oxysterols. Mediates cell positioning and movement of a number of cells by binding the 7-alpha,25-OHC ligand that forms a chemotactic gradient. Binding of 7-alpha,25-OHC mediates the correct localization of B-cells during humoral immune responses. Guides B-cell movement along the B-cell zone-T-cell zone boundary and later to interfollicular and outer follicular regions. Its specific expression during B-cell maturation helps position B-cells appropriately for mounting T-dependent antibody responses. Collaborates with CXCR5 to mediate B-cell migration; probably by forming a heterodimer with CXCR5 that affects the interaction between of CXCL13 and CXCR5. Also acts as a chemotactic receptor for some T-cells upon binding to 7-alpha,25-OHC ligand. Promotes follicular helper T (Tfh) cells differentiation by positioning activated T-cells at the follicle-T-zone interface, promoting contact of newly activated CD4 T-cells with activated dendritic cells and exposing them to Tfh-cell-promoting inducible costimulator (ICOS) ligand. Expression in splenic dendritic cells is required for their homeostasis, localization and ability to induce B- and T-cell responses: GPR183 acts as a chemotactic receptor in dendritic cells that mediates the accumulation of CD4(+) dendritic cells in bridging channels. Regulates migration of astrocytes and is involved in communication between astrocytes and macrophages. Promotes osteoclast precursor migration to bone surfaces. Signals constitutively through G(i)-alpha, but not G(s)-alpha or G(q)-alpha. Signals constitutively also via MAPK1/3 (ERK1/2). This Homo sapiens (Human) protein is G-protein coupled receptor 183.